We begin with the raw amino-acid sequence, 287 residues long: Small ribosomal subunit biogenesis GTPase RsgA (287 aa).

Residues 61-218 (SSELIRPTVA…LVDTPGFTTL (158 aa)) form the CP-type G domain. GTP contacts are provided by residues 110–113 (NKED) and 161–169 (GPSGAGKST). Residues Cys242, Cys247, His249, and Cys255 each coordinate Zn(2+).

This sequence belongs to the TRAFAC class YlqF/YawG GTPase family. RsgA subfamily. Monomer. Associates with 30S ribosomal subunit, binds 16S rRNA. Zn(2+) serves as cofactor.

The protein resides in the cytoplasm. Functionally, one of several proteins that assist in the late maturation steps of the functional core of the 30S ribosomal subunit. Helps release RbfA from mature subunits. May play a role in the assembly of ribosomal proteins into the subunit. Circularly permuted GTPase that catalyzes slow GTP hydrolysis, GTPase activity is stimulated by the 30S ribosomal subunit. This Clostridium perfringens (strain SM101 / Type A) protein is Small ribosomal subunit biogenesis GTPase RsgA.